A 931-amino-acid chain; its full sequence is Ribosome-releasing factor 2, mitochondrial (931 aa).

The tr-type G domain maps to 63-379 (EKTRNIGIIA…AVNNLLPGPS (317 aa)). GTP is bound by residues 72-79 (AHIDAGKT), 162-166 (DTPGH), and 216-219 (NKLD).

The protein belongs to the TRAFAC class translation factor GTPase superfamily. Classic translation factor GTPase family. EF-G/EF-2 subfamily.

The protein resides in the mitochondrion. In terms of biological role, mitochondrial GTPase that mediates the disassembly of ribosomes from messenger RNA at the termination of mitochondrial protein biosynthesis. Not involved in the GTP-dependent ribosomal translocation step during translation elongation. This Talaromyces stipitatus (strain ATCC 10500 / CBS 375.48 / QM 6759 / NRRL 1006) (Penicillium stipitatum) protein is Ribosome-releasing factor 2, mitochondrial (mef2).